A 239-amino-acid chain; its full sequence is MNEDIKNNLNNSDESNGKIIVGLDEAGRGPVIGPMVIASVKINEKDLPRLDDLGLRDSKQLSKKKREELYTKISEICDVKKVVINPEKIDEQMEIINLNKIELGAFSKLANHFIKENENISIYIDACSSNEQSFSNQFKAKLINKNVEIIAEHKADENYKIVSAASIIAKVTRDNVIEEYKKTFGEIGSGYPSDPKTKKFLKNYVHENKGLPKIARKSWATSKNLLKEIEESKIFQWVK.

The 214-residue stretch at 18 to 231 (KIIVGLDEAG…SKNLLKEIEE (214 aa)) folds into the RNase H type-2 domain. A divalent metal cation contacts are provided by Asp-24, Glu-25, and Asp-125.

This sequence belongs to the RNase HII family. Requires Mn(2+) as cofactor. Mg(2+) serves as cofactor.

It localises to the cytoplasm. It catalyses the reaction Endonucleolytic cleavage to 5'-phosphomonoester.. Endonuclease that specifically degrades the RNA of RNA-DNA hybrids. This chain is Ribonuclease HII, found in Methanococcus maripaludis (strain C5 / ATCC BAA-1333).